The chain runs to 296 residues: 5'-3' exonuclease (296 aa).

Residues 175 to 262 form the 5'-3' exonuclease domain; the sequence is VMPKALIDIK…VPLACTLKDA (88 aa).

Functionally, 5'-3' exonuclease acting preferentially on double-stranded DNA. This is 5'-3' exonuclease (ypcP) from Bacillus subtilis (strain 168).